Here is a 221-residue protein sequence, read N- to C-terminus: Probable hydrogenase maturation factor HypB (221 aa).

A G-domain region spans residues 35–196; the sequence is AFDFMGAIGS…KRINPDAEVV (162 aa). 2 residues coordinate Ni(2+): Cys-95 and His-96. Residues Cys-95, His-96, His-100, His-104, and Cys-127 each contribute to the Zn(2+) site. Cys-127 serves as a coordination point for Ni(2+).

This sequence belongs to the SIMIBI class G3E GTPase family. HypB/HupM subfamily. Homodimer.

In terms of biological role, involved in the maturation of [NiFe] hydrogenases. Required for nickel insertion into the metal center of the hydrogenase. Exhibits a low intrinsic GTPase activity, which is essential for nickel insertion. The chain is Probable hydrogenase maturation factor HypB from Methanocaldococcus jannaschii (strain ATCC 43067 / DSM 2661 / JAL-1 / JCM 10045 / NBRC 100440) (Methanococcus jannaschii).